The following is a 110-amino-acid chain: Small ubiquitin-related modifier 3 (110 aa).

Residues K5 and K7 each participate in a glycyl lysine isopeptide (Lys-Gly) (interchain with G-Cter in SUMO2) cross-link. K11 participates in a covalent cross-link: Glycyl lysine isopeptide (Lys-Gly) (interchain with G-Cter in SUMO); alternate. Residue K11 forms a Glycyl lysine isopeptide (Lys-Gly) (interchain with G-Cter in SUMO2); alternate linkage. The 78-residue stretch at 15 to 92 folds into the Ubiquitin-like domain; it reads DHINLKVAGQ…IDVFQQQTGG (78 aa). Polar residues predominate over residues 88–101; sequence QQTGGSASRGSVPT. Residues 88 to 110 are disordered; it reads QQTGGSASRGSVPTPNRCPDLCY. G92 is covalently cross-linked (Glycyl lysine isopeptide (Gly-Lys) (interchain with K-? in acceptor proteins)). A propeptide spanning residues 93 to 110 is cleaved from the precursor; the sequence is SASRGSVPTPNRCPDLCY.

Belongs to the ubiquitin family. SUMO subfamily. As to quaternary structure, interacts with SAE2 and UBE2I. Covalently attached to a number of proteins. Interacts with USP25 (via ts SIM domain); the interaction sumoylates USP25 and inhibits its ubiquitin hydrolyzing activity. Interacts with BMAL1. Post-translationally, polymeric chains can be formed through Lys-11 cross-linking. In terms of processing, cleavage of precursor form by SENP1, SENP2 or SENP5 is necessary for function.

Its subcellular location is the cytoplasm. It localises to the nucleus. The protein resides in the PML body. Its function is as follows. Ubiquitin-like protein which can be covalently attached to target lysines either as a monomer or as a lysine-linked polymer. Does not seem to be involved in protein degradation and may function as an antagonist of ubiquitin in the degradation process. Plays a role in a number of cellular processes such as nuclear transport, DNA replication and repair, mitosis and signal transduction. Covalent attachment to its substrates requires prior activation by the E1 complex SAE1-SAE2 and linkage to the E2 enzyme UBE2I, and can be promoted by an E3 ligase such as PIAS1-4, RANBP2 or CBX4. Plays a role in the regulation of sumoylation status of SETX. This is Small ubiquitin-related modifier 3 from Mus musculus (Mouse).